The primary structure comprises 94 residues: Translation initiation factor 1A 2 (94 aa).

The S1-like domain occupies 6–80; sequence GRRNLRMPND…EKANVEWRYS (75 aa).

It belongs to the eIF-1A family.

In terms of biological role, seems to be required for maximal rate of protein biosynthesis. Enhances ribosome dissociation into subunits and stabilizes the binding of the initiator Met-tRNA(I) to 40 S ribosomal subunits. The polypeptide is Translation initiation factor 1A 2 (eIF1A2) (Halobacterium salinarum (strain ATCC 700922 / JCM 11081 / NRC-1) (Halobacterium halobium)).